The following is a 157-amino-acid chain: MGSRPTPGLQRTTSAEYRLPSTRPPASVPSTAPGGPVVGRGPTGGPQAPKAKWSALGADGVQRDQLWRELLEAERRSQQRWAQNWSFLKDYDPMGNKKEPVKLPDHVPRFSDTVPNSTNRAVGSRVDTPLGKTLIGLDFFFVEGARKKKLEEELQPI.

Disordered stretches follow at residues 1-57 and 92-124; these read MGSR…SALG and DPMG…AVGS. The segment covering 92-109 has biased composition (basic and acidic residues); the sequence is DPMGNKKEPVKLPDHVPR.

It localises to the cell projection. It is found in the cilium. In Bos taurus (Bovine), this protein is Ciliary microtubule inner protein 5 (CIMIP5).